The primary structure comprises 103 residues: Co-chaperonin GroES (103 aa).

The protein belongs to the GroES chaperonin family. In terms of assembly, heptamer of 7 subunits arranged in a ring. Interacts with the chaperonin GroEL.

It is found in the plastid. Its subcellular location is the cyanelle. Its function is as follows. Together with the chaperonin GroEL, plays an essential role in assisting protein folding. The GroEL-GroES system forms a nano-cage that allows encapsulation of the non-native substrate proteins and provides a physical environment optimized to promote and accelerate protein folding. GroES binds to the apical surface of the GroEL ring, thereby capping the opening of the GroEL channel. This Cyanophora paradoxa protein is Co-chaperonin GroES.